The primary structure comprises 474 residues: UDP glycosyltransferase 9 (474 aa).

Residues Ser-296, 349 to 350, 367 to 375, and 389 to 392 each bind UDP-alpha-D-glucose; these read WC, HCGWNSTLE, and WADQ.

The protein belongs to the UDP-glycosyltransferase family.

This is UDP glycosyltransferase 9 from Catharanthus roseus (Madagascar periwinkle).